The sequence spans 124 residues: Small ribosomal subunit protein uS12 (124 aa).

The interval Met1–Gly32 is disordered. Asp89 carries the post-translational modification 3-methylthioaspartic acid. A disordered region spans residues Gln105 to Ser124. The segment covering Lys108–Gly118 has biased composition (basic residues).

It belongs to the universal ribosomal protein uS12 family. In terms of assembly, part of the 30S ribosomal subunit. Contacts proteins S8 and S17. May interact with IF1 in the 30S initiation complex.

Functionally, with S4 and S5 plays an important role in translational accuracy. In terms of biological role, interacts with and stabilizes bases of the 16S rRNA that are involved in tRNA selection in the A site and with the mRNA backbone. Located at the interface of the 30S and 50S subunits, it traverses the body of the 30S subunit contacting proteins on the other side and probably holding the rRNA structure together. The combined cluster of proteins S8, S12 and S17 appears to hold together the shoulder and platform of the 30S subunit. The polypeptide is Small ribosomal subunit protein uS12 (Kineococcus radiotolerans (strain ATCC BAA-149 / DSM 14245 / SRS30216)).